The sequence spans 166 residues: MLSEDLVKSGAIKFGDFILTSGKRSDYYVDIKEAATDPNLLSEIASEFSKMIHARKIAGMELGAVPLIVATSLNMGIPYVIVRKERSHGTLSLIVGRLNRGEEVDVIEDVVTTGNSVLKAINVLRENGVVVKDAYCVVDREEGGAKLLENNGIKLHPIVRISELKR.

5-phospho-alpha-D-ribose 1-diphosphate is bound by residues Arg-83, Lys-84, Arg-86, His-88, and 108–116; that span reads EDVVTTGNS. Residues Thr-112 and Arg-140 each coordinate orotate.

It belongs to the purine/pyrimidine phosphoribosyltransferase family. PyrE subfamily. As to quaternary structure, homodimer. Mg(2+) serves as cofactor.

It catalyses the reaction orotidine 5'-phosphate + diphosphate = orotate + 5-phospho-alpha-D-ribose 1-diphosphate. It functions in the pathway pyrimidine metabolism; UMP biosynthesis via de novo pathway; UMP from orotate: step 1/2. In terms of biological role, catalyzes the transfer of a ribosyl phosphate group from 5-phosphoribose 1-diphosphate to orotate, leading to the formation of orotidine monophosphate (OMP). The sequence is that of Orotate phosphoribosyltransferase from Thermoplasma volcanium (strain ATCC 51530 / DSM 4299 / JCM 9571 / NBRC 15438 / GSS1).